Consider the following 1408-residue polypeptide: DNA-directed RNA polymerase subunit beta' (1408 aa).

The Zn(2+) site is built by Cys70, Cys72, Cys85, and Cys88. Residues Asp460, Asp462, and Asp464 each coordinate Mg(2+). Residues Cys814, Cys888, Cys895, and Cys898 each contribute to the Zn(2+) site.

Belongs to the RNA polymerase beta' chain family. The RNAP catalytic core consists of 2 alpha, 1 beta, 1 beta' and 1 omega subunit. When a sigma factor is associated with the core the holoenzyme is formed, which can initiate transcription. The cofactor is Mg(2+). It depends on Zn(2+) as a cofactor.

The catalysed reaction is RNA(n) + a ribonucleoside 5'-triphosphate = RNA(n+1) + diphosphate. In terms of biological role, DNA-dependent RNA polymerase catalyzes the transcription of DNA into RNA using the four ribonucleoside triphosphates as substrates. The sequence is that of DNA-directed RNA polymerase subunit beta' from Shewanella frigidimarina (strain NCIMB 400).